A 343-amino-acid polypeptide reads, in one-letter code: HTH-type transcriptional regulator GntR (343 aa).

Residues 16–70 form the HTH lacI-type domain; it reads PTLNEVARRAGVSPITASRALRGVASVAEELAQKVRDAARELGYVANPAARALAS. Residues 18–37 constitute a DNA-binding region (H-T-H motif); sequence LNEVARRAGVSPITASRALR.

With respect to regulation, free GntR fails to recognize gluconate and 6-phosphogluconate, whereas the GntR/DNA complexes recognize both ligands. It is therefore likely that GntR DNA binding induces structural changes that permit GntR to recognize effectors. Its function is as follows. Involved in the regulation of glucose metabolism. Represses its own expression as well as that of the gluconate permease GntP. It employs an effector mediated de-repression mechanism: in the absence of ligand, GntR binds to the gntR and gntP promoters and represses their expression. The release of promoter bound GntR is induced by gluconate and 6-phosphogluconate that bind with similar apparent affinities to the GntR/DNA complex. The release of GntR leads to transcription of the genes. This chain is HTH-type transcriptional regulator GntR, found in Pseudomonas aeruginosa (strain ATCC 15692 / DSM 22644 / CIP 104116 / JCM 14847 / LMG 12228 / 1C / PRS 101 / PAO1).